The following is a 91-amino-acid chain: Small ribosomal subunit protein bS16 (91 aa).

This sequence belongs to the bacterial ribosomal protein bS16 family.

The sequence is that of Small ribosomal subunit protein bS16 from Lacticaseibacillus casei (strain BL23) (Lactobacillus casei).